The sequence spans 1070 residues: Carbamoyl phosphate synthase large chain (1070 aa).

The tract at residues 1 to 401 is carboxyphosphate synthetic domain; sequence MPKRDDIKTI…ALLKAVRSLE (401 aa). Positions 129, 169, 175, 176, 208, 210, 215, 241, 242, 243, 284, and 298 each coordinate ATP. Residues 133-327 form the ATP-grasp 1 domain; it reads RDLMNELGEP…IAKLAAKIAV (195 aa). Residues Q284, E298, and N300 each coordinate Mg(2+). Mn(2+) is bound by residues Q284, E298, and N300. Residues 402–546 are oligomerization domain; sequence IGADHLLLEE…YSTYEDENES (145 aa). A carbamoyl phosphate synthetic domain region spans residues 547-929; that stretch reads IRSSKESVIV…ALYKGFVASG (383 aa). The ATP-grasp 2 domain maps to 671–861; it reads EKALEILQIP…MANVATRVIL (191 aa). Positions 707, 746, 748, 752, 777, 778, 779, 780, 820, and 832 each coordinate ATP. Mg(2+) is bound by residues Q820, E832, and N834. Mn(2+) contacts are provided by Q820, E832, and N834. Residues 930 to 1070 enclose the MGS-like domain; that stretch reads TTMHDYGTVL…SEVKQPKARV (141 aa). An allosteric domain region spans residues 930 to 1070; the sequence is TTMHDYGTVL…SEVKQPKARV (141 aa).

This sequence belongs to the CarB family. Composed of two chains; the small (or glutamine) chain promotes the hydrolysis of glutamine to ammonia, which is used by the large (or ammonia) chain to synthesize carbamoyl phosphate. Tetramer of heterodimers (alpha,beta)4. It depends on Mg(2+) as a cofactor. The cofactor is Mn(2+).

The catalysed reaction is hydrogencarbonate + L-glutamine + 2 ATP + H2O = carbamoyl phosphate + L-glutamate + 2 ADP + phosphate + 2 H(+). The enzyme catalyses hydrogencarbonate + NH4(+) + 2 ATP = carbamoyl phosphate + 2 ADP + phosphate + 2 H(+). Its pathway is amino-acid biosynthesis; L-arginine biosynthesis; carbamoyl phosphate from bicarbonate: step 1/1. It functions in the pathway pyrimidine metabolism; UMP biosynthesis via de novo pathway; (S)-dihydroorotate from bicarbonate: step 1/3. Its function is as follows. Large subunit of the glutamine-dependent carbamoyl phosphate synthetase (CPSase). CPSase catalyzes the formation of carbamoyl phosphate from the ammonia moiety of glutamine, carbonate, and phosphate donated by ATP, constituting the first step of 2 biosynthetic pathways, one leading to arginine and/or urea and the other to pyrimidine nucleotides. The large subunit (synthetase) binds the substrates ammonia (free or transferred from glutamine from the small subunit), hydrogencarbonate and ATP and carries out an ATP-coupled ligase reaction, activating hydrogencarbonate by forming carboxy phosphate which reacts with ammonia to form carbamoyl phosphate. In Listeria innocua serovar 6a (strain ATCC BAA-680 / CLIP 11262), this protein is Carbamoyl phosphate synthase large chain.